The chain runs to 124 residues: S-adenosylmethionine decarboxylase proenzyme (124 aa).

Serine 63 serves as the catalytic Schiff-base intermediate with substrate; via pyruvic acid. At serine 63 the chain carries Pyruvic acid (Ser); by autocatalysis. Histidine 68 (proton acceptor; for processing activity) is an active-site residue. Cysteine 83 (proton donor; for catalytic activity) is an active-site residue.

This sequence belongs to the prokaryotic AdoMetDC family. Type 1 subfamily. Heterotetramer of two alpha and two beta chains arranged as a dimer of alpha/beta heterodimers. The cofactor is pyruvate. In terms of processing, is synthesized initially as an inactive proenzyme. Formation of the active enzyme involves a self-maturation process in which the active site pyruvoyl group is generated from an internal serine residue via an autocatalytic post-translational modification. Two non-identical subunits are generated from the proenzyme in this reaction, and the pyruvate is formed at the N-terminus of the alpha chain, which is derived from the carboxyl end of the proenzyme. The post-translation cleavage follows an unusual pathway, termed non-hydrolytic serinolysis, in which the side chain hydroxyl group of the serine supplies its oxygen atom to form the C-terminus of the beta chain, while the remainder of the serine residue undergoes an oxidative deamination to produce ammonia and the pyruvoyl group blocking the N-terminus of the alpha chain.

It carries out the reaction S-adenosyl-L-methionine + H(+) = S-adenosyl 3-(methylsulfanyl)propylamine + CO2. Its pathway is amine and polyamine biosynthesis; S-adenosylmethioninamine biosynthesis; S-adenosylmethioninamine from S-adenosyl-L-methionine: step 1/1. In terms of biological role, catalyzes the decarboxylation of S-adenosylmethionine to S-adenosylmethioninamine (dcAdoMet), the propylamine donor required for the synthesis of the polyamines spermine and spermidine from the diamine putrescine. This chain is S-adenosylmethionine decarboxylase proenzyme, found in Caldanaerobacter subterraneus subsp. tengcongensis (strain DSM 15242 / JCM 11007 / NBRC 100824 / MB4) (Thermoanaerobacter tengcongensis).